The chain runs to 227 residues: MAEKQTLIDAINDRFNSQIEAVVAGVDMVTIELLPTHLLEVCTALRDDPPFNFELLLDVCGVDYLEYGMSPWRTEETPNTGFSRGFEEVIQEQIIPWNKPRFAVVYHLLSLRHNHRIRLKTYVEGDPPLVPSVIKIWSSADWYEREAFDLYGIVFEGHPDLRRLLTDYGFVGHPFRKDFPLIGEVELRYDAAQQRCVYEPVSIQPRVLVPKVIRVDSRYEKGEKENG.

This sequence belongs to the complex I 30 kDa subunit family. NDH-1 is composed of 14 different subunits. Subunits NuoB, C, D, E, F, and G constitute the peripheral sector of the complex.

The protein resides in the cell inner membrane. It catalyses the reaction a quinone + NADH + 5 H(+)(in) = a quinol + NAD(+) + 4 H(+)(out). NDH-1 shuttles electrons from NADH, via FMN and iron-sulfur (Fe-S) centers, to quinones in the respiratory chain. The immediate electron acceptor for the enzyme in this species is believed to be ubiquinone. Couples the redox reaction to proton translocation (for every two electrons transferred, four hydrogen ions are translocated across the cytoplasmic membrane), and thus conserves the redox energy in a proton gradient. In Coxiella burnetii (strain Dugway 5J108-111), this protein is NADH-quinone oxidoreductase subunit C.